The chain runs to 202 residues: LexA repressor (202 aa).

A DNA-binding region (H-T-H motif) is located at residues 28-48 (RAEIAQRLGFRSPNAAEEHLK). Residues Ser119 and Lys156 each act as for autocatalytic cleavage activity in the active site.

Belongs to the peptidase S24 family. In terms of assembly, homodimer.

It carries out the reaction Hydrolysis of Ala-|-Gly bond in repressor LexA.. Functionally, represses a number of genes involved in the response to DNA damage (SOS response), including recA and lexA. Binds to the 16 bp palindromic sequence 5'-CTGTATATATATACAG-3'. In the presence of single-stranded DNA, RecA interacts with LexA causing an autocatalytic cleavage which disrupts the DNA-binding part of LexA, leading to derepression of the SOS regulon and eventually DNA repair. The protein is LexA repressor of Citrobacter koseri (strain ATCC BAA-895 / CDC 4225-83 / SGSC4696).